A 187-amino-acid chain; its full sequence is Large ribosomal subunit protein uL6c (187 aa).

This sequence belongs to the universal ribosomal protein uL6 family. As to quaternary structure, part of the 50S ribosomal subunit.

Its subcellular location is the plastid. The protein resides in the chloroplast. Its function is as follows. Binds 23S rRNA. The protein is Large ribosomal subunit protein uL6c (rpl6) of Thalassiosira pseudonana (Marine diatom).